A 96-amino-acid polypeptide reads, in one-letter code: Venom protein 3.1 (96 aa).

Residues 1–25 (MKFSLISVFLFAVFLSNENIFQAIA) form the signal peptide. The tract at residues 45 to 84 (EAVMSSSLTNEEESRNWPHRATRNTLEKGQKRSPAARSEI) is disordered.

Belongs to the non-disulfide-bridged peptide (NDBP) superfamily. In terms of tissue distribution, expressed by the venom gland.

The protein localises to the secreted. This is Venom protein 3.1 from Lychas mucronatus (Chinese swimming scorpion).